The sequence spans 411 residues: Small ribosomal subunit protein bS1c (411 aa).

Residues 1-41 constitute a chloroplast transit peptide; sequence MASLAQQLAGGLRCPPLSNSNLSKPFSPKHTLKPRFSPIVS. 3 S1 motif domains span residues 96–166, 184–248, and 261–329; these read GSRV…LSLR, DVVV…MSNR, and GSVV…LSTK.

The protein belongs to the bacterial ribosomal protein bS1 family. Component of the chloroplast small ribosomal subunit (SSU). Mature 70S chloroplast ribosomes of higher plants consist of a small (30S) and a large (50S) subunit. The 30S small subunit contains 1 molecule of ribosomal RNA (16S rRNA) and 24 different proteins. The 50S large subunit contains 3 rRNA molecules (23S, 5S and 4.5S rRNA) and 33 different proteins.

It is found in the plastid. The protein resides in the chloroplast. Component of the chloroplast ribosome (chloro-ribosome), a dedicated translation machinery responsible for the synthesis of chloroplast genome-encoded proteins, including proteins of the transcription and translation machinery and components of the photosynthetic apparatus. Actively engaged in the initiation complex formation via a strong mRNA-binding activity. Possesses a poly(A)-binding activity which might play a role as a control element in chloroplast mRNA translation. This Spinacia oleracea (Spinach) protein is Small ribosomal subunit protein bS1c (RPS1).